A 291-amino-acid polypeptide reads, in one-letter code: Signal peptidase I (291 aa).

The Cytoplasmic portion of the chain corresponds to 1–45 (MTMKKLTSTTTTLWDNKLFINNLKNFMQTNTESNNNKTTAQEWKS). A helical transmembrane segment spans residues 46–66 (FILVVVIALMIRILIIESFVV). At 67–291 (PTGSMKATIL…IFRNLYSIED (225 aa)) the chain is on the periplasmic side. Residues serine 70 and lysine 133 contribute to the active site.

Belongs to the peptidase S26 family.

The protein resides in the cell inner membrane. The catalysed reaction is Cleavage of hydrophobic, N-terminal signal or leader sequences from secreted and periplasmic proteins.. The sequence is that of Signal peptidase I (lepB) from Rickettsia bellii (strain RML369-C).